Consider the following 335-residue polypeptide: Probable cytosolic iron-sulfur protein assembly protein Ciao1 (335 aa).

7 WD repeats span residues Gly-12–Lys-51, Gly-57–Asn-96, Gly-101–Cys-140, Pro-146–Asp-185, Ser-192–Gly-231, Gln-250–Glu-289, and Ala-301–Glu-335.

This sequence belongs to the WD repeat CIA1 family.

Functionally, essential component of the cytosolic iron-sulfur (Fe/S) protein assembly machinery. Required for the maturation of extramitochondrial Fe/S proteins. This Drosophila sechellia (Fruit fly) protein is Probable cytosolic iron-sulfur protein assembly protein Ciao1.